A 162-amino-acid polypeptide reads, in one-letter code: Precursor protein UG (162 aa).

The N-terminal stretch at 1-19 (MERILLCFIVATLVAISMA) is a signal peptide. The propeptide occupies 20-23 (NPRP). 2 disulfides stabilise this stretch: C30–C42 and C33–C49. Residues 56–59 (VPKP) constitute a propeptide that is removed on maturation. 2 disulfides stabilise this stretch: C66–C78 and C69–C85. A propeptide spanning residues 92–95 (VPKP) is cleaved from the precursor. Intrachain disulfides connect C102–C114 and C105–C121. Positions 128–131 (VPKP) are excised as a propeptide. Cystine bridges form between C138-C150 and C141-C157.

This sequence belongs to the sea anemone BBH family.

Its subcellular location is the secreted. It is found in the nematocyst. Its function is as follows. Affects the ASIC3 channel (ACCN3) and produces analgesic effects. It produces a reversible inhibition effect on both the transient and the sustained current of human ASIC3 channels expressed in X.laevis oocytes. It completely blocks the transient component (IC(50)=10 uM) and partially (48%) inhibits the amplitude of the sustained component (IC(50)=1.44 uM). Using in vivo tests in mice, it reverses inflammatory and acid-induced pain. Does not affect the ASIC3 channel. Does not cause lethality or paralysis of noble crayfish (A.astacus) at a dose of 1 mg/kg. The protein is Precursor protein UG of Urticina grebelnyi (Painted anemone).